Here is a 147-residue protein sequence, read N- to C-terminus: Myoglobin (147 aa).

In terms of domain architecture, Globin spans Ala-2–Glu-137. A nitrite-binding site is contributed by His-60. O2 is bound at residue His-60. Residue His-89 participates in heme b binding.

It belongs to the globin family. In terms of assembly, monomeric.

The protein localises to the cytoplasm. Its subcellular location is the sarcoplasm. It carries out the reaction Fe(III)-heme b-[protein] + nitric oxide + H2O = Fe(II)-heme b-[protein] + nitrite + 2 H(+). The catalysed reaction is H2O2 + AH2 = A + 2 H2O. Functionally, monomeric heme protein which primary function is to store oxygen and facilitate its diffusion within muscle tissues. Reversibly binds oxygen through a pentacoordinated heme iron and enables its timely and efficient release as needed during periods of heightened demand. Depending on the oxidative conditions of tissues and cells, and in addition to its ability to bind oxygen, it also has a nitrite reductase activity whereby it regulates the production of bioactive nitric oxide. Under stress conditions, like hypoxia and anoxia, it also protects cells against reactive oxygen species thanks to its pseudoperoxidase activity. This chain is Myoglobin (mb), found in Makaira nigricans (Atlantic blue marlin).